The chain runs to 391 residues: Aspartate carbamoyltransferase 3, chloroplastic (391 aa).

The transit peptide at 1-69 (MTASSSLFSC…SKCDKMIKTR (69 aa)) directs the protein to the chloroplast. Residues R137 and T138 each contribute to the carbamoyl phosphate site. The UMP site is built by R137 and T138. K167 lines the L-aspartate pocket. 3 residues coordinate carbamoyl phosphate: R188, H216, and Q219. UMP contacts are provided by R188 and H216. UMP-binding residues include R249 and R311. Positions 249 and 311 each coordinate L-aspartate. 2 residues coordinate carbamoyl phosphate: L351 and P352.

This sequence belongs to the aspartate/ornithine carbamoyltransferase superfamily. ATCase family. Homotrimer.

The protein localises to the plastid. Its subcellular location is the chloroplast. The catalysed reaction is carbamoyl phosphate + L-aspartate = N-carbamoyl-L-aspartate + phosphate + H(+). It functions in the pathway pyrimidine metabolism; UMP biosynthesis via de novo pathway; (S)-dihydroorotate from bicarbonate: step 2/3. Feedback inhibited by UMP. Catalyzes the condensation of carbamoyl phosphate and aspartate to form carbamoyl aspartate and inorganic phosphate, the committed step in the de novo pyrimidine nucleotide biosynthesis pathway. This chain is Aspartate carbamoyltransferase 3, chloroplastic (PYRB3), found in Pisum sativum (Garden pea).